We begin with the raw amino-acid sequence, 441 residues long: 4-hydroxy-3-methylbut-2-en-1-yl diphosphate synthase (flavodoxin) (441 aa).

Residues Cys320, Cys323, Cys366, and Glu373 each coordinate [4Fe-4S] cluster.

This sequence belongs to the IspG family. [4Fe-4S] cluster is required as a cofactor.

It carries out the reaction (2E)-4-hydroxy-3-methylbut-2-enyl diphosphate + oxidized [flavodoxin] + H2O + 2 H(+) = 2-C-methyl-D-erythritol 2,4-cyclic diphosphate + reduced [flavodoxin]. It participates in isoprenoid biosynthesis; isopentenyl diphosphate biosynthesis via DXP pathway; isopentenyl diphosphate from 1-deoxy-D-xylulose 5-phosphate: step 5/6. Converts 2C-methyl-D-erythritol 2,4-cyclodiphosphate (ME-2,4cPP) into 1-hydroxy-2-methyl-2-(E)-butenyl 4-diphosphate. The sequence is that of 4-hydroxy-3-methylbut-2-en-1-yl diphosphate synthase (flavodoxin) from Rhodopseudomonas palustris (strain ATCC BAA-98 / CGA009).